Consider the following 65-residue polypeptide: Large ribosomal subunit protein bL35 (65 aa).

Residues 1-26 are disordered; the sequence is MPKIKTVRGAAKRFKKTASGGFKRKQ. Residues 10 to 26 are compositionally biased toward basic residues; that stretch reads AAKRFKKTASGGFKRKQ.

The protein belongs to the bacterial ribosomal protein bL35 family.

This is Large ribosomal subunit protein bL35 from Mannheimia succiniciproducens (strain KCTC 0769BP / MBEL55E).